Here is a 318-residue protein sequence, read N- to C-terminus: Lipoyl synthase (318 aa).

[4Fe-4S] cluster contacts are provided by Cys64, Cys69, Cys75, Cys90, Cys94, Cys97, and Ser304. Positions 76 to 293 constitute a Radical SAM core domain; it reads FSGGTATFMI…AEEGYKMGFK (218 aa).

It belongs to the radical SAM superfamily. Lipoyl synthase family. Requires [4Fe-4S] cluster as cofactor.

The protein resides in the cytoplasm. The catalysed reaction is [[Fe-S] cluster scaffold protein carrying a second [4Fe-4S](2+) cluster] + N(6)-octanoyl-L-lysyl-[protein] + 2 oxidized [2Fe-2S]-[ferredoxin] + 2 S-adenosyl-L-methionine + 4 H(+) = [[Fe-S] cluster scaffold protein] + N(6)-[(R)-dihydrolipoyl]-L-lysyl-[protein] + 4 Fe(3+) + 2 hydrogen sulfide + 2 5'-deoxyadenosine + 2 L-methionine + 2 reduced [2Fe-2S]-[ferredoxin]. It participates in protein modification; protein lipoylation via endogenous pathway; protein N(6)-(lipoyl)lysine from octanoyl-[acyl-carrier-protein]: step 2/2. Functionally, catalyzes the radical-mediated insertion of two sulfur atoms into the C-6 and C-8 positions of the octanoyl moiety bound to the lipoyl domains of lipoate-dependent enzymes, thereby converting the octanoylated domains into lipoylated derivatives. This chain is Lipoyl synthase, found in Pseudomonas syringae pv. tomato (strain ATCC BAA-871 / DC3000).